The chain runs to 593 residues: NADH-quinone oxidoreductase subunit C/D (593 aa).

Residues 1 to 184 (MTADNAIFIP…DPYSLTLAKQ (184 aa)) are NADH dehydrogenase I subunit C. Positions 208–593 (DYMFLNLGPN…IDFVMADVDR (386 aa)) are NADH dehydrogenase I subunit D.

This sequence in the N-terminal section; belongs to the complex I 30 kDa subunit family. It in the C-terminal section; belongs to the complex I 49 kDa subunit family. In terms of assembly, NDH-1 is composed of 13 different subunits. Subunits NuoB, CD, E, F, and G constitute the peripheral sector of the complex.

The protein resides in the cell inner membrane. It carries out the reaction a quinone + NADH + 5 H(+)(in) = a quinol + NAD(+) + 4 H(+)(out). NDH-1 shuttles electrons from NADH, via FMN and iron-sulfur (Fe-S) centers, to quinones in the respiratory chain. The immediate electron acceptor for the enzyme in this species is believed to be ubiquinone. Couples the redox reaction to proton translocation (for every two electrons transferred, four hydrogen ions are translocated across the cytoplasmic membrane), and thus conserves the redox energy in a proton gradient. The protein is NADH-quinone oxidoreductase subunit C/D of Pseudomonas putida (strain W619).